The following is a 661-amino-acid chain: UvrABC system protein C (661 aa).

A GIY-YIG domain is found at 25-104 (AEPGCYLMRD…IKNHQPHFNV (80 aa)). The UVR domain occupies 214-249 (DELQHLLQEQMERYAERMDYESAARVRDQLQGLDQL). Over residues 636–652 (FFHPSDEGTDADARAAL) the composition is skewed to basic and acidic residues. Positions 636–661 (FFHPSDEGTDADARAALEEQPQELSA) are disordered.

It belongs to the UvrC family. Interacts with UvrB in an incision complex.

It localises to the cytoplasm. In terms of biological role, the UvrABC repair system catalyzes the recognition and processing of DNA lesions. UvrC both incises the 5' and 3' sides of the lesion. The N-terminal half is responsible for the 3' incision and the C-terminal half is responsible for the 5' incision. This Synechococcus sp. (strain CC9605) protein is UvrABC system protein C.